The sequence spans 381 residues: 6-oxocyclohex-1-ene-1-carbonyl-CoA hydrolase (381 aa).

It belongs to the enoyl-CoA hydratase/isomerase family. As to quaternary structure, homohexamer.

It carries out the reaction 6-oxocyclohex-1-ene-1-carbonyl-CoA + 2 H2O = 3-hydroxy-6-carboxyhexanoyl-CoA + H(+). The protein operates within aromatic compound metabolism; benzoyl-CoA degradation. Its function is as follows. Involved in the central benzoyl-CoA catabolism. Catalyzes the addition of one molecule of water to the double bond and the hydrolytic cleavage of C-C bond in the alicyclic ring, 6-oxocyclohex-1-ene-1-carbonyl-CoA (6-OCH-CoA) to yield 3-hydroxypimelyl-CoA. This is 6-oxocyclohex-1-ene-1-carbonyl-CoA hydrolase from Geobacter metallireducens (strain ATCC 53774 / DSM 7210 / GS-15).